The sequence spans 106 residues: Nucleoid-associated protein XCV1128 (106 aa).

Positions 81–106 are disordered; sequence IDAESKDRMGSATAGMQLPPGMKLPF.

It belongs to the YbaB/EbfC family. Homodimer.

The protein resides in the cytoplasm. Its subcellular location is the nucleoid. In terms of biological role, binds to DNA and alters its conformation. May be involved in regulation of gene expression, nucleoid organization and DNA protection. The sequence is that of Nucleoid-associated protein XCV1128 from Xanthomonas euvesicatoria pv. vesicatoria (strain 85-10) (Xanthomonas campestris pv. vesicatoria).